The primary structure comprises 248 residues: MMKKILGVIPARYASSRFPGKPLAKIGDKTMIEWTYRNASRSSVLSELVVATDDVRIHEVVQKFGGRSVMTSSDHPSGTDRIIEVANQFSEYSIIVNIQGDEPGIEPELIDGVASLKASHPEWAMSTAAVPLLDFSHAIDFNRVKVIIDRNGKAIYFSRSLIPSQFKTTVPLYRHLGIYGYDRDFLLQYNSLPKSNLEESESLEQLRAIEAGYGIGIYLSKEAGLSVDTPADLEIVIEDFKKRKWISE.

Belongs to the KdsB family.

The protein resides in the cytoplasm. The enzyme catalyses 3-deoxy-alpha-D-manno-oct-2-ulosonate + CTP = CMP-3-deoxy-beta-D-manno-octulosonate + diphosphate. Its pathway is nucleotide-sugar biosynthesis; CMP-3-deoxy-D-manno-octulosonate biosynthesis; CMP-3-deoxy-D-manno-octulosonate from 3-deoxy-D-manno-octulosonate and CTP: step 1/1. The protein operates within bacterial outer membrane biogenesis; lipopolysaccharide biosynthesis. Its function is as follows. Activates KDO (a required 8-carbon sugar) for incorporation into bacterial lipopolysaccharide in Gram-negative bacteria. This is 3-deoxy-manno-octulosonate cytidylyltransferase from Leptospira interrogans serogroup Icterohaemorrhagiae serovar copenhageni (strain Fiocruz L1-130).